A 151-amino-acid chain; its full sequence is Neuroglobin (151 aa).

Residues 1–149 (MERPEPELIR…VVQAMSRGWD (149 aa)) form the Globin domain. Heme b is bound by residues His-64 and His-96.

This sequence belongs to the globin family. Monomer. Homodimer and homotetramer; disulfide-linked. Mainly monomeric but also detected as part of homodimers and homotetramers. Interacts with 14-3-3 proteins; regulates the phosphorylation of NGB. Could interact (ferrous form) with G-alpha(i) proteins (GTP-bound form). Post-translationally, phosphorylated during hypoxia by ERK1/ERK2. Phosphorylation regulates the heme pocket hexacoordination preventing the association of His-64 with the heme metal center. Thereby, promotes the access of dioxygen and nitrite to the heme and stimulates the nitrite reductase activity. Phosphorylation during hypoxia is stabilized by 14-3-3 proteins.

The protein resides in the cytoplasm. The protein localises to the cytosol. It localises to the mitochondrion matrix. It carries out the reaction Fe(III)-heme b-[protein] + nitric oxide + H2O = Fe(II)-heme b-[protein] + nitrite + 2 H(+). Functionally, monomeric globin with a bis-histidyl six-coordinate heme-iron atom through which it can bind dioxygen, carbon monoxide and nitric oxide. Could help transport oxygen and increase its availability to the metabolically active neuronal tissues, though its low quantity in tissues as well as its high affinity for dioxygen, which may limit its oxygen-releasing ability, argue against it. The ferrous/deoxygenated form exhibits a nitrite reductase activity and it could produce nitric oxide which in turn inhibits cellular respiration in response to hypoxia. In its ferrous/deoxygenated state, it may also exhibit GDI (Guanine nucleotide Dissociation Inhibitor) activity toward heterotrimeric G-alpha proteins, thereby regulating signal transduction to facilitate neuroprotective responses in the wake of hypoxia and associated oxidative stress. The chain is Neuroglobin from Canis lupus familiaris (Dog).